The sequence spans 198 residues: MALITRKSFILVGVPPIMKSLIPIVLATLVILGMGCIGGGEEKMSLKVSSVFGNNEFIPAKYTCEGVDINPPLKIEGLSDNVKSLVIIVDDPDAPMGTFTHWIAWNIPPVTEIPEGIPKQGEVDKPIHIIQGRNDFGRIGYNGPCPPRGHGVHHYHFKVYALDTTLNLKPGASRKELEKAMEGHVIQYGELVGLYERK.

It belongs to the UPF0098 family.

This chain is UPF0098 protein PH1269, found in Pyrococcus horikoshii (strain ATCC 700860 / DSM 12428 / JCM 9974 / NBRC 100139 / OT-3).